The following is a 319-amino-acid chain: Putative binding protein BAB2_1146 (319 aa).

An N-terminal signal peptide occupies residues 1 to 22 (MKRRTFLAMSLALTFLPSVALA).

It belongs to the bacterial solute-binding protein SsuA/TauA family. As to quaternary structure, the complex is composed of two ATP-binding proteins (BAB2_1147), two transmembrane proteins (BAB2_1148) and a solute-binding protein (BAB2_1146).

It is found in the periplasm. Its function is as follows. Probably part of an ABC transporter complex. This Brucella abortus (strain 2308) protein is Putative binding protein BAB2_1146.